We begin with the raw amino-acid sequence, 367 residues long: tRNA 2-selenouridine synthase (367 aa).

Residues 12 to 135 form the Rhodanese domain; the sequence is FLSGVAMLDV…MRGFLIETTD (124 aa). Cysteine 95 serves as the catalytic S-selanylcysteine intermediate.

Belongs to the SelU family. In terms of assembly, monomer.

It carries out the reaction 5-methylaminomethyl-2-thiouridine(34) in tRNA + selenophosphate + (2E)-geranyl diphosphate + H2O + H(+) = 5-methylaminomethyl-2-selenouridine(34) in tRNA + (2E)-thiogeraniol + phosphate + diphosphate. It catalyses the reaction 5-methylaminomethyl-2-thiouridine(34) in tRNA + (2E)-geranyl diphosphate = 5-methylaminomethyl-S-(2E)-geranyl-thiouridine(34) in tRNA + diphosphate. The enzyme catalyses 5-methylaminomethyl-S-(2E)-geranyl-thiouridine(34) in tRNA + selenophosphate + H(+) = 5-methylaminomethyl-2-(Se-phospho)selenouridine(34) in tRNA + (2E)-thiogeraniol. The catalysed reaction is 5-methylaminomethyl-2-(Se-phospho)selenouridine(34) in tRNA + H2O = 5-methylaminomethyl-2-selenouridine(34) in tRNA + phosphate. Its function is as follows. Involved in the post-transcriptional modification of the uridine at the wobble position (U34) of tRNA(Lys), tRNA(Glu) and tRNA(Gln). Catalyzes the conversion of 2-thiouridine (S2U-RNA) to 2-selenouridine (Se2U-RNA). Acts in a two-step process involving geranylation of 2-thiouridine (S2U) to S-geranyl-2-thiouridine (geS2U) and subsequent selenation of the latter derivative to 2-selenouridine (Se2U) in the tRNA chain. The sequence is that of tRNA 2-selenouridine synthase from Cupriavidus necator (strain ATCC 17699 / DSM 428 / KCTC 22496 / NCIMB 10442 / H16 / Stanier 337) (Ralstonia eutropha).